The chain runs to 383 residues: Cathepsin D (383 aa).

Residues 1 to 18 (MKLLILTLFLATIVLAQA) form the signal peptide. Residues 19-48 (LTVPLNFHQASRESRRRVPQKWSNRLSALN) constitute a propeptide that is removed on maturation. The 316-residue stretch at 63-378 (YYGAITIGTP…DFGNKQVGFA (316 aa)) folds into the Peptidase A1 domain. Aspartate 81 is a catalytic residue. Cysteine 94 and cysteine 101 form a disulfide bridge. Asparagine 118 and asparagine 238 each carry an N-linked (GlcNAc...) asparagine glycan. Cysteine 259 and cysteine 263 are disulfide-bonded. Aspartate 268 is a catalytic residue. A disulfide bridge links cysteine 302 with cysteine 339. Asparagine 310 carries an N-linked (GlcNAc...) asparagine glycan.

It belongs to the peptidase A1 family. As to quaternary structure, monomer. N-glycosylated on 2 out of the 3 potential sites. Glycans contain sulfated Mannose.

It is found in the lysosome. The protein localises to the secreted. The catalysed reaction is Specificity similar to, but narrower than, that of pepsin A. Does not cleave the 4-Gln-|-His-5 bond in B chain of insulin.. Functionally, protease that may act during cell growth and/or development. The sequence is that of Cathepsin D (ctsD) from Dictyostelium discoideum (Social amoeba).